The sequence spans 247 residues: uncharacterized protein (247 aa).

2 helical membrane passes run 9-29 (IIAICLIFLSILVYSIHFLIF) and 37-57 (SYFLLHLAFVPIEVLLVSLII).

The protein localises to the cell membrane. This is an uncharacterized protein from Methanocaldococcus jannaschii (strain ATCC 43067 / DSM 2661 / JAL-1 / JCM 10045 / NBRC 100440) (Methanococcus jannaschii).